Here is a 455-residue protein sequence, read N- to C-terminus: Chromosomal replication initiator protein DnaA (455 aa).

A domain I, interacts with DnaA modulators region spans residues 1 to 73; it reads METSLETLWS…RDVVHEILGH (73 aa). The domain II stretch occupies residues 73–116; the sequence is HPVEIQIEIAQGDSNATISAPEVASPPPTASPVENTNTSQRQQA. Residues 92–116 are disordered; sequence APEVASPPPTASPVENTNTSQRQQA. Residues 104–116 are compositionally biased toward polar residues; that stretch reads PVENTNTSQRQQA. Residues 117-333 are domain III, AAA+ region; sequence SLNPKYVFSR…GALIRAVAYI (217 aa). ATP-binding residues include Gly161, Gly163, Lys164, and Thr165. Residues 334–455 form a domain IV, binds dsDNA region; it reads SISGLPMNVE…GDRIKLANQP (122 aa).

It belongs to the DnaA family. Oligomerizes as a right-handed, spiral filament on DNA at oriC.

The protein localises to the cytoplasm. Functionally, plays an essential role in the initiation and regulation of chromosomal replication. ATP-DnaA binds to the origin of replication (oriC) to initiate formation of the DNA replication initiation complex once per cell cycle. Binds the DnaA box (a 9 base pair repeat at the origin) and separates the double-stranded (ds)DNA. Forms a right-handed helical filament on oriC DNA; dsDNA binds to the exterior of the filament while single-stranded (ss)DNA is stabiized in the filament's interior. The ATP-DnaA-oriC complex binds and stabilizes one strand of the AT-rich DNA unwinding element (DUE), permitting loading of DNA polymerase. After initiation quickly degrades to an ADP-DnaA complex that is not apt for DNA replication. Binds acidic phospholipids. The chain is Chromosomal replication initiator protein DnaA from Acaryochloris marina (strain MBIC 11017).